The chain runs to 1171 residues: Protein WWC2 (1171 aa).

2 consecutive WW domains span residues 9 to 42 (LPLP…DPRD) and 56 to 89 (NELP…DPRK). Coiled coils occupy residues 120–193 (KEQR…YKEQ), 223–257 (ELKS…LEEA), and 301–420 (LAEK…KSAT). 2 disordered regions span residues 521–552 (SPTA…LSPP) and 603–637 (QALA…KNPD). The span at 534-551 (PKSVTSLSSLSSLSSLSP) shows a compositional bias: low complexity. 2 stretches are compositionally biased toward basic and acidic residues: residues 606–616 (AERKSTGEGLR) and 625–637 (GRTD…KNPD). One can recognise a C2 domain in the interval 684 to 806 (GAAQAQLILR…FSNDVHTQWY (123 aa)). Coiled coils occupy residues 836 to 870 (LDLD…EQLC) and 1047 to 1123 (DLEL…NAEK).

It belongs to the WWC family.

It localises to the cytoplasm. Its subcellular location is the cytosol. Functionally, negative regulator of the Hippo signaling pathway, also known as the Salvador-Warts-Hippo (SWH) pathway. The chain is Protein WWC2 (wwc2) from Xenopus tropicalis (Western clawed frog).